Here is a 1142-residue protein sequence, read N- to C-terminus: Protein kinase C-like (1142 aa).

Positions 1 to 67 (MNDEDKVHDI…LRELQMRRLG (67 aa)) constitute an REM-1 1 domain. A disordered region spans residues 70 to 139 (VDNMSLGASP…PPDSNVPRAR (70 aa)). The REM-1 2 domain occupies 149–226 (KFDTPHLGPR…LKRYEELHID (78 aa)). A C2 domain is found at 231–349 (GPDDDSINLP…LRRKKIEAEM (119 aa)). Residues 357–403 (ADRVGSRAPPPQFPMGAQSPQFAAPPTSPGSQEQNTMIPPQAPPPSQ) are disordered. A compositionally biased stretch (polar residues) spans 385 to 394 (PGSQEQNTMI). 2 Phorbol-ester/DAG-type zinc fingers span residues 457–505 (GHKF…VTKC) and 525–576 (PHRF…PDFC). Disordered stretches follow at residues 592-622 (TQKKTHKDKASSMSERTLRPGSKTSISSGSI) and 651-807 (SQTT…TDPG). Residues 613–622 (SKTSISSGSI) are compositionally biased toward polar residues. 3 stretches are compositionally biased toward low complexity: residues 663–677 (TSTSSTTASAAAAAA), 712–724 (SAQQQQGYGSPQQ), and 741–765 (PQARPQQQQQQQQQTPQQVSPMYQQ). A Protein kinase domain is found at 817 to 1076 (FNFLAVLGKG…AQEIMSQPFF (260 aa)). Residues 823 to 831 (LGKGNFGKV) and lysine 846 contribute to the ATP site. Aspartate 942 functions as the Proton acceptor in the catalytic mechanism. An AGC-kinase C-terminal domain is found at 1077 to 1142 (RNINWDDIYH…RGFSYTADFE (66 aa)).

Belongs to the protein kinase superfamily. AGC Ser/Thr protein kinase family. PKC subfamily.

The enzyme catalyses L-seryl-[protein] + ATP = O-phospho-L-seryl-[protein] + ADP + H(+). The catalysed reaction is L-threonyl-[protein] + ATP = O-phospho-L-threonyl-[protein] + ADP + H(+). This Neurospora crassa (strain ATCC 24698 / 74-OR23-1A / CBS 708.71 / DSM 1257 / FGSC 987) protein is Protein kinase C-like.